Here is a 729-residue protein sequence, read N- to C-terminus: MTMDQKTDNAGKCPVAHTAPRGRSNRDWWPDQLDVQVLHRHSDLSDPMGKSFNYAEEFRKLDLDALKRDLHALMTDSQDWWPADFGHYGGLFIRMAWHSAGTYRITDGRGGAGQGQQRFAPLNSWPDNANLDKARRLLWPIKQKYGNRISWADLLILTGNVALESMGFKTFGFAGGRTDVWEPEELFWGPEGTWLGDERYSGERQLSEPLAAVQMGLIYVNPEGPNGNPDPVAAAHDIRETFARMAMNDEETVALIAGGHTFGKTHGAGDPSFIGADPEGGAIEDQGLGWKSTFGTGVGKDAITGGPEVTWSQTPTRWSNYFFENLFNFEWELSKSPAGAHQWKAKNAEASVPDAYDATRKHVPTMLTTDLSLRFDPVYEKISRRFLENPDQFADAFARAWFKLTHRDMGPKVRYLGPEVPAEDLIWQDVIPPVDHELVDDADVAGLKAKILASSLSVQELVSTAWDSASTFRGSDKRGGANGARIRLAPQKDWEVNQPAQLARVLSVLEGIQRDFNASQAGGKKISLADLIVLAGNAGVEKAARAAGQEIIVPFTPGRMDASEAQTDAASFAALEPRADGFRNYVNSSRLQFMKPEEALVDRAQLLTLTAPEMTVLVGGLRVLKAGQPEHGVFTSRPEALTNDFFVNLLDMGTQWSPVEGKEGVYEGRDRKTGAARWTGTRVDLIFGSHSQLRAFAEVYAQTDAREKFVKDFVAAWTKVMNADRFDLV.

The interval 1–26 is disordered; that stretch reads MTMDQKTDNAGKCPVAHTAPRGRSNR. The segment at residues 97–219 is a cross-link (tryptophyl-tyrosyl-methioninium (Trp-Tyr) (with M-245)); sequence WHSAGTYRIT…LAAVQMGLIY (123 aa). H98 functions as the Proton acceptor in the catalytic mechanism. The segment at residues 219 to 245 is a cross-link (tryptophyl-tyrosyl-methioninium (Tyr-Met) (with W-97)); the sequence is YVNPEGPNGNPDPVAAAHDIRETFARM. H260 provides a ligand contact to heme b.

It belongs to the peroxidase family. Peroxidase/catalase subfamily. Homodimer or homotetramer. Requires heme b as cofactor. In terms of processing, formation of the three residue Trp-Tyr-Met cross-link is important for the catalase, but not the peroxidase activity of the enzyme.

It carries out the reaction H2O2 + AH2 = A + 2 H2O. It catalyses the reaction 2 H2O2 = O2 + 2 H2O. Its function is as follows. Bifunctional enzyme with both catalase and broad-spectrum peroxidase activity. The polypeptide is Catalase-peroxidase (Sinorhizobium medicae (strain WSM419) (Ensifer medicae)).